Consider the following 378-residue polypeptide: UPF0754 membrane protein BcerKBAB4_0766 (378 aa).

Helical transmembrane passes span 1–21 and 357–377; these read MNIW…GGYT and YLGA…LLFL.

Belongs to the UPF0754 family.

The protein resides in the cell membrane. This is UPF0754 membrane protein BcerKBAB4_0766 from Bacillus mycoides (strain KBAB4) (Bacillus weihenstephanensis).